A 418-amino-acid chain; its full sequence is tRNA(Met) cytidine acetate ligase (418 aa).

Residues glycine 95, asparagine 161, and arginine 186 each contribute to the ATP site.

Belongs to the TmcAL family.

The protein resides in the cytoplasm. The enzyme catalyses cytidine(34) in elongator tRNA(Met) + acetate + ATP = N(4)-acetylcytidine(34) in elongator tRNA(Met) + AMP + diphosphate. Functionally, catalyzes the formation of N(4)-acetylcytidine (ac(4)C) at the wobble position of elongator tRNA(Met), using acetate and ATP as substrates. First activates an acetate ion to form acetyladenylate (Ac-AMP) and then transfers the acetyl group to tRNA to form ac(4)C34. The protein is tRNA(Met) cytidine acetate ligase of Thermotoga maritima (strain ATCC 43589 / DSM 3109 / JCM 10099 / NBRC 100826 / MSB8).